The primary structure comprises 181 residues: Putative NAD(P)H-dependent FMN-containing oxidoreductase YwqN (181 aa).

Belongs to the SsuE family. FMN is required as a cofactor.

In terms of biological role, putative NADPH-dependent oxidoreductase. The polypeptide is Putative NAD(P)H-dependent FMN-containing oxidoreductase YwqN (ywqN) (Bacillus subtilis (strain 168)).